A 72-amino-acid chain; its full sequence is MCRHSLRSDGAGFYQLAGCEYSFSAIKIAAGGQFLPVICAMAMKSHFFLISVLNRRLTLTAVQGILGRFSLF.

This is an uncharacterized protein from Escherichia coli (strain K12).